The sequence spans 268 residues: Chymotrypsin-C (268 aa).

Positions 1–16 are cleaved as a signal peptide; sequence MLGITVFTTFLAYASS. A propeptide spans 17–29 (activation peptide); it reads CGAPIFQPNLSAR. Disulfide bonds link Cys17–Cys141, Cys59–Cys75, Cys155–Cys222, Cys186–Cys202, and Cys212–Cys243. Residue Asn25 is glycosylated (N-linked (GlcNAc...) asparagine). Residues 30–268 enclose the Peptidase S1 domain; that stretch reads VVGGEDAIPH…IDWINQKLQL (239 aa). Catalysis depends on charge relay system residues His74 and Asp121. Ser216 functions as the Charge relay system in the catalytic mechanism.

Belongs to the peptidase S1 family. Elastase subfamily. As to quaternary structure, monomer. The zymogen is secreted as a ternary complex composed of procarboxypeptidase A, chymotrypsinogen C and proproteinase E. In terms of tissue distribution, pancreas.

Its subcellular location is the secreted. It localises to the extracellular space. It catalyses the reaction Preferential cleavage: Leu-|-Xaa, Tyr-|-Xaa, Phe-|-Xaa, Met-|-Xaa, Trp-|-Xaa, Gln-|-Xaa, Asn-|-Xaa.. Its function is as follows. Regulates activation and degradation of trypsinogens and procarboxypeptidases by targeting specific cleavage sites within their zymogen precursors. Has chymotrypsin-type protease activity and hypocalcemic activity. This chain is Chymotrypsin-C (CTRC), found in Bos taurus (Bovine).